A 210-amino-acid chain; its full sequence is NADH dehydrogenase [ubiquinone] iron-sulfur protein 8, mitochondrial (210 aa).

Residues 1–34 (MRCLTMPTLLRALAQAAHTGPPGGRTLHSSAVAA) constitute a mitochondrion transit peptide. 4Fe-4S ferredoxin-type domains are found at residues 102 to 131 (RRYPSGEERCIACKLCEAVCPAQAITIEAE) and 141 to 170 (TRYDIDMTKCIYCGFCQEACPVDAIVEGPN). Residues C111, C114, C117, C121, C150, C153, C156, and C160 each contribute to the [4Fe-4S] cluster site.

It belongs to the complex I 23 kDa subunit family. As to quaternary structure, core subunit of respiratory chain NADH dehydrogenase (Complex I) which is composed of 45 different subunits. This is a component of the iron-sulfur (IP) fragment of the enzyme. Interacts with RAB5IF. Requires [4Fe-4S] cluster as cofactor.

It localises to the mitochondrion inner membrane. The catalysed reaction is a ubiquinone + NADH + 5 H(+)(in) = a ubiquinol + NAD(+) + 4 H(+)(out). Its function is as follows. Core subunit of the mitochondrial membrane respiratory chain NADH dehydrogenase (Complex I) which catalyzes electron transfer from NADH through the respiratory chain, using ubiquinone as an electron acceptor. Essential for the catalytic activity and assembly of complex I. The chain is NADH dehydrogenase [ubiquinone] iron-sulfur protein 8, mitochondrial (NDUFS8) from Macaca fascicularis (Crab-eating macaque).